Reading from the N-terminus, the 1206-residue chain is MIDVNNFEYMKIGLASPNKIRSWSRGEVKKPETINYRTLKPEKDGLFCERIFGPQKDWECHCGKYKRVRYKGVVCDRCGVEVTRAKVRRERMGHIELAAPVSHIWYFKGIPSRMGLVLDMSPRSLEEVIYFASYVVTEPGDTPLEKKQLLSEKEYRAYYDKYGRTFTASMGAEAIRKLLADIDLQKEVNALKEELETAQGQRRTRAIKRLEVLEAFRNSGNEPSWMVLDVLPVIPPELRPMVQLDGGRFATSDLNDLYRRVINRNNRLKRLLDLGAPNIIVQNEKRMLQEAVDALIDNGRRGRPVTGPGNRPLKSLSHMLKGKQGRFRQNLLGKRVDYSGRSVIVVGPNLKMYQCGLPKEMALELFKPFVMKELVSKGLAHNIKSAKRKVERVQPEVWDVLEEVIREHPVLLNRAPTLHRLGIQAFEPILVEGRAIKLHPLVCTAYNADFDGDQMAVHVPLSAEAQAEARILMLAAQNILNPKDGKPVVTPSQDMVLGNYYLTMENANARGEGSVFKDSNEALIAYQNGYVHLHTRIAVPVASLNKPTFADEESNMLLLTTVGKLLFNEIMPDSFPYINEPTASNLEVKTPEKYLVPSNTNVKELLKERDLVPPFKKGFLGNIISEVFKKFKITETSKMLDRMKDLGFKYSTKAGITVGVSDIVVLSEKKEILDEADKKVERIMKQFRRGLITEEERYDRVISIWSDAKDLIQSKLMGTLDARNPIFMMSDSGARGNASNFTQLAGMRGLMANPSGRIIELPIKSSFREGLTVLEYFISTHGARKGLADTALKTADSGYLTRRLVDVAQDVIVRENDCGTDRGLEVTAIKEGTETIEGLYDRLVGRVAFKTVRHPETDEVLVRRGELMNEDTAKQIVDAGVESVTIRSVFTCNTHHGVCKACYGRNLATGSDVEVGEAVGIIAAQSIGEPGTQLTMRTFHTGGVAGDDITQGLPRIQELFEARNPKGQAVITEIDGDVVDVRDGDKREVTVQSELETKNYSIPYGSRLKVAVGDKVVAGQTLTEGSIDPKELLKVTGMGGVQEYLLREVQKVYRLQGVEIGDKHVEVMVRQMLRKVRVVDAGDTGILPGSLVEIQRFNEANKKVLLSNMRPATGRPVLLGITKASLETDSFLSAASFQETTRVLTDAAIKGKRDELLGLKENVIIGKLVPAGTGLARYKTLGIHSAHDERAENEEAGTPEEVLVQD.

Zn(2+) contacts are provided by cysteine 60, cysteine 62, cysteine 75, and cysteine 78. The Mg(2+) site is built by aspartate 449, aspartate 451, and aspartate 453. Positions 818, 892, 899, and 902 each coordinate Zn(2+).

The protein belongs to the RNA polymerase beta' chain family. In terms of assembly, the RNAP catalytic core consists of 2 alpha, 1 beta, 1 beta' and 1 omega subunit. When a sigma factor is associated with the core the holoenzyme is formed, which can initiate transcription. Mg(2+) serves as cofactor. Zn(2+) is required as a cofactor.

The enzyme catalyses RNA(n) + a ribonucleoside 5'-triphosphate = RNA(n+1) + diphosphate. Its function is as follows. DNA-dependent RNA polymerase catalyzes the transcription of DNA into RNA using the four ribonucleoside triphosphates as substrates. The polypeptide is DNA-directed RNA polymerase subunit beta' (Shouchella clausii (strain KSM-K16) (Alkalihalobacillus clausii)).